The chain runs to 450 residues: tRNA modification GTPase MnmE (450 aa).

3 residues coordinate (6S)-5-formyl-5,6,7,8-tetrahydrofolate: Arg23, Glu79, and Lys118. The 161-residue stretch at 214–374 (GITLILVGKP…LKDHILAKVG (161 aa)) folds into the TrmE-type G domain. Asn224 is a K(+) binding site. GTP is bound by residues 224-229 (NAGKSS), 243-249 (TSIAGTT), and 268-271 (DTAG). Position 228 (Ser228) interacts with Mg(2+). The K(+) site is built by Thr243, Ile245, and Thr248. A Mg(2+)-binding site is contributed by Thr249. Position 450 (Lys450) interacts with (6S)-5-formyl-5,6,7,8-tetrahydrofolate.

The protein belongs to the TRAFAC class TrmE-Era-EngA-EngB-Septin-like GTPase superfamily. TrmE GTPase family. Homodimer. Heterotetramer of two MnmE and two MnmG subunits. K(+) serves as cofactor.

It is found in the cytoplasm. Its function is as follows. Exhibits a very high intrinsic GTPase hydrolysis rate. Involved in the addition of a carboxymethylaminomethyl (cmnm) group at the wobble position (U34) of certain tRNAs, forming tRNA-cmnm(5)s(2)U34. The sequence is that of tRNA modification GTPase MnmE from Francisella philomiragia subsp. philomiragia (strain ATCC 25017 / CCUG 19701 / FSC 153 / O#319-036).